A 212-amino-acid polypeptide reads, in one-letter code: Methylthioribulose-1-phosphate dehydratase (212 aa).

Zn(2+) is bound by residues His97 and His99.

This sequence belongs to the aldolase class II family. MtnB subfamily. As to quaternary structure, homotetramer. Zn(2+) is required as a cofactor.

It catalyses the reaction 5-(methylsulfanyl)-D-ribulose 1-phosphate = 5-methylsulfanyl-2,3-dioxopentyl phosphate + H2O. It functions in the pathway amino-acid biosynthesis; L-methionine biosynthesis via salvage pathway; L-methionine from S-methyl-5-thio-alpha-D-ribose 1-phosphate: step 2/6. In terms of biological role, catalyzes the dehydration of methylthioribulose-1-phosphate (MTRu-1-P) into 2,3-diketo-5-methylthiopentyl-1-phosphate (DK-MTP-1-P). This is Methylthioribulose-1-phosphate dehydratase from Bacillus cereus (strain B4264).